We begin with the raw amino-acid sequence, 48 residues long: FRGLAKLLKIGLKSFARVLKKVLPKAAKAGKALAKSLADENAIRQQNQ.

Its subcellular location is the secreted. It is found in the target cell membrane. Disrupts cell membranes, particularly those rich in phosphocholine, through formation of pores. Has antimicrobial activity, hemolytic activity and insecticidal activity. The protein is M-oxotoxin-Ot1b of Oxyopes takobius (Lynx spider).